The sequence spans 357 residues: Chorismate synthase (357 aa).

An NADP(+)-binding site is contributed by arginine 46. FMN-binding positions include 123-125 (RSS), 235-236 (NA), glycine 275, 290-294 (KPTPS), and arginine 316.

This sequence belongs to the chorismate synthase family. As to quaternary structure, homotetramer. It depends on FMNH2 as a cofactor.

The enzyme catalyses 5-O-(1-carboxyvinyl)-3-phosphoshikimate = chorismate + phosphate. It participates in metabolic intermediate biosynthesis; chorismate biosynthesis; chorismate from D-erythrose 4-phosphate and phosphoenolpyruvate: step 7/7. Catalyzes the anti-1,4-elimination of the C-3 phosphate and the C-6 proR hydrogen from 5-enolpyruvylshikimate-3-phosphate (EPSP) to yield chorismate, which is the branch point compound that serves as the starting substrate for the three terminal pathways of aromatic amino acid biosynthesis. This reaction introduces a second double bond into the aromatic ring system. The sequence is that of Chorismate synthase from Nitratiruptor sp. (strain SB155-2).